Consider the following 238-residue polypeptide: Heme oxygenase 1 (238 aa).

The protein belongs to the heme oxygenase family.

It carries out the reaction heme b + 3 reduced [NADPH--hemoprotein reductase] + 3 O2 = biliverdin IXalpha + CO + Fe(2+) + 3 oxidized [NADPH--hemoprotein reductase] + 3 H2O + H(+). In terms of biological role, catalyzes the opening of the heme ring with the release of iron. Key enzyme in the synthesis of the chromophoric part of the photosynthetic antennae. Upon overexpression in E.coli with PCB:ferredoxin oxidoreductase, CpeS and either CpcB or PecB permits synthesis of phycocyanin-coupled CpcB or PecB. The chain is Heme oxygenase 1 (pbsA1) from Nostoc sp. (strain PCC 7120 / SAG 25.82 / UTEX 2576).